Consider the following 347-residue polypeptide: S-adenosylmethionine:tRNA ribosyltransferase-isomerase (347 aa).

Belongs to the QueA family. Monomer.

Its subcellular location is the cytoplasm. It carries out the reaction 7-aminomethyl-7-carbaguanosine(34) in tRNA + S-adenosyl-L-methionine = epoxyqueuosine(34) in tRNA + adenine + L-methionine + 2 H(+). Its pathway is tRNA modification; tRNA-queuosine biosynthesis. Transfers and isomerizes the ribose moiety from AdoMet to the 7-aminomethyl group of 7-deazaguanine (preQ1-tRNA) to give epoxyqueuosine (oQ-tRNA). This Ectopseudomonas mendocina (strain ymp) (Pseudomonas mendocina) protein is S-adenosylmethionine:tRNA ribosyltransferase-isomerase.